The primary structure comprises 126 residues: Fluoride-specific ion channel FluC (126 aa).

4 helical membrane passes run 6 to 26, 36 to 56, 69 to 89, and 99 to 119; these read FVAVGVGAAAGAWLRWGFSVL, YGTLAANLLGGYLIGLAVGFF, LAITGFLGGLTTFSTFSSEVV, and WAAMHLLLHLGGSLLLTALGL. Residues Gly76 and Thr79 each coordinate Na(+).

This sequence belongs to the fluoride channel Fluc/FEX (TC 1.A.43) family.

The protein localises to the cell inner membrane. It carries out the reaction fluoride(in) = fluoride(out). Its activity is regulated as follows. Na(+) is not transported, but it plays an essential structural role and its presence is essential for fluoride channel function. Functionally, fluoride-specific ion channel. Important for reducing fluoride concentration in the cell, thus reducing its toxicity. This is Fluoride-specific ion channel FluC from Cupriavidus taiwanensis (strain DSM 17343 / BCRC 17206 / CCUG 44338 / CIP 107171 / LMG 19424 / R1) (Ralstonia taiwanensis (strain LMG 19424)).